Reading from the N-terminus, the 771-residue chain is Probable glycosyltransferase STELLO1 (771 aa).

Residues 1–23 (MLVQDRAAPSPAKPPKSQIRELP) form a disordered region. The Cytoplasmic segment spans residues 1–50 (MLVQDRAAPSPAKPPKSQIRELPTHQQIRRRFSEPKNLDFSTWFSENLSR). Residues 51 to 71 (IAVFSLLIVTIVAFFFLYNTT) traverse the membrane as a helical segment. Over 72-771 (DTASLLCFQS…EGDPLLMELV (700 aa)) the chain is Lumenal. N242 and N729 each carry an N-linked (GlcNAc...) asparagine glycan.

Belongs to the STELLO family. In terms of assembly, homo- and heterodimer with STL2. Interacts with CESA1, CESA3, CESA4, CESA6, CESA7 and CESA8, but not with GOT1. As to expression, expressed in cells that are expanding or producing secondary cell walls.

Its subcellular location is the golgi apparatus membrane. Its function is as follows. Probable glycosyltransferase regulating the assembly and trafficking of cellulose synthase complexes. The sequence is that of Probable glycosyltransferase STELLO1 from Arabidopsis thaliana (Mouse-ear cress).